Here is a 533-residue protein sequence, read N- to C-terminus: Acid-sensing ion channel 3 (533 aa).

The Cytoplasmic segment spans residues 1–19 (MKPRSGLEEAQRRQASDIR). The helical transmembrane segment at 20 to 40 (VFASSCTMHGLGHIFGPGGLT) threads the bilayer. Thr-40 is subject to Phosphothreonine; by PKC. Residues 41 to 435 (LRRGLWATAV…EQKAAYEVSE (395 aa)) are Extracellular-facing. Intrachain disulfides connect Cys-93/Cys-187, Cys-165/Cys-172, Cys-283/Cys-372, Cys-317/Cys-368, Cys-321/Cys-366, Cys-330/Cys-352, and Cys-332/Cys-344. A glycan (N-linked (GlcNAc...) asparagine) is linked at Asn-176. The segment at 286–310 (ASLDPDDFDPEPSDPLGSPRPRPSP) is disordered. The N-linked (GlcNAc...) asparagine glycan is linked to Asn-400. The chain crosses the membrane as a helical span at residues 436 to 456 (LLGDIGGQMGLFIGASLLTIL). A GAS motif; ion selectivity filter motif is present at residues 449-451 (GAS). Residues 457–533 (EILDYLCEVF…HRTCYLVTRL (77 aa)) are Cytoplasmic-facing. At Ser-523 the chain carries Phosphoserine; by PKC. The short motif at 530-533 (VTRL) is the PDZ-binding element.

It belongs to the amiloride-sensitive sodium channel (TC 1.A.6) family. ASIC3 subfamily. Can form homotrimeric channels. Heterotrimer; forms functional heterotrimers producing channel with different properties. Forms heterotrimers with ASIC2; gives rise to a biphasic current with a sustained current which discriminates poorly between Na(+) and K(+). Interacts with STOM; inhibits ASIC3 acid-evoked current. Interacts with LIN7B (via PDZ domain); increases ASIC3 expression at the plasma membrane. Interacts with MAGI1 (via PDZ domain); probably regulates ASIC3. Interacts with GOPC (via PDZ domain); probably regulates ASIC3. Interacts with DLG4 (via PDZ domain); reduces ASIC3 expression at the plasma membrane. In terms of processing, could be phosphorylated by PKC, promoting activation of ASIC2/ASIC3 heterotrimers. Expressed in sciatic nerve and dorsal root ganglion (at protein level). Expressed in sensory neurons of dorsal root ganglion. Expressed in Golgi interneurons in the granular layer. Also found in superior cervical ganglia, spinal cord and brain stem.

The protein resides in the cell membrane. It localises to the cytoplasm. The enzyme catalyses Na(+)(in) = Na(+)(out). It carries out the reaction K(+)(in) = K(+)(out). The catalysed reaction is Ca(2+)(in) = Ca(2+)(out). Its activity is regulated as follows. Inhibited by the diuretic drug amiloride. Inhibited by gadolinium ions. Inhibited by extracellular Ca(2+). Activated by lactate. Salicylic acid, diclofenac and aspirin inhibit the sustained current component. Activated by the vertebrate neuropeptides NPFF and NPSF, and the related FMRFamide. Specifically and reversibly inhibited by the a sea anemone toxin APETx2. ASIC3-containing channels are potentiated by the cono-RFamide CNF-Tx1.1, and probably CNF-Tx1.2 and CNF-Tx1.3 (AC P0DL71). Its function is as follows. Forms pH-gated heterotrimeric sodium channels that act as postsynaptic excitatory receptors in the nervous system. Upon extracellular acidification, these channels generate a biphasic current with a fast inactivating and a slow sustained phase. ASIC3 is more sensitive to protons and gates between closed, open, and desensitized states faster than other ASICs. Displays high selectivity for sodium ions but can also permit the permeation of other cations. As a neuronal acid sensor, probably contributes to mechanoreception, acid nociception, and heat nociception. By forming heterotrimeric channels with ASIC2, generates a biphasic current with a fast inactivating and a slow sustained phase, which in sensory neurons is proposed to mediate the pain induced by acidosis that occurs in ischemic, damaged or inflamed tissues. The polypeptide is Acid-sensing ion channel 3 (Rattus norvegicus (Rat)).